A 563-amino-acid chain; its full sequence is Putative cysteine ligase BshC (563 aa).

Residues 474–506 (LEQSLMGTSKQAEKALDTLRQKTQRANRRKHDE) are a coiled coil.

This sequence belongs to the BshC family.

This is Putative cysteine ligase BshC from Prosthecochloris aestuarii (strain DSM 271 / SK 413).